A 377-amino-acid chain; its full sequence is Fructose-bisphosphate aldolase 1, chloroplastic (377 aa).

Substrate contacts are provided by arginine 74 and lysine 164. The active-site Proton acceptor is glutamate 204. Residue lysine 246 is the Schiff-base intermediate with dihydroxyacetone-P of the active site.

This sequence belongs to the class I fructose-bisphosphate aldolase family.

It is found in the plastid. It localises to the chloroplast. It carries out the reaction beta-D-fructose 1,6-bisphosphate = D-glyceraldehyde 3-phosphate + dihydroxyacetone phosphate. It participates in carbohydrate degradation; glycolysis; D-glyceraldehyde 3-phosphate and glycerone phosphate from D-glucose: step 4/4. The sequence is that of Fructose-bisphosphate aldolase 1, chloroplastic (ALDCHL) from Chlamydomonas reinhardtii (Chlamydomonas smithii).